Consider the following 591-residue polypeptide: MVATSKQTTQGYVVEAYGNLLRVHVDGHVRQGEVAYVSVDDTWLKAEIIEVVGDEVKIQVFEETQGISRGALVTFSGHLLEAELGPGLLQGIFDGLQNRLEILADTSLFLRRGEYVNAICRETVWAYTQKASVGSVLSRGDVLGTVKEGRFDHKIMVPFSCFEEVTITWVISSGNYTVDTVVAKGRTSTGEELEFTMVQKWPIKQAFLEGEKVPSHEIMDVGLRVLDTQIPVLKGGTFCTPGPFGAGKTVLQHHLSKYAAVDIVVLCACGERAGEVVEILQEFPHLTDPHTGQSLMHRTCIICNTSSMPVAARESSIYLGITIAEYYRQMGLHILLLADSTSRWAQALREISGRLEEIPGEEAFPAYLASRIAAFYERGGAVKMKDGSEGSLTICGAVSPAGGNFEEPVTQATLSVVGAFCGLSKARADARRYPSIDPMISWSKYLDSVAEILEKKVPGWGESVKQASRFLEEGAEIGKRIEVVGEEGISMEDMEIFLKSELYDFCYLQQNAFDAEDCYCPFDRQIELFSLMNHIFNSRFCFDCPDNARSFFLELQSKIKTLNGQKFLSEEYQKGLEVIYKLLESKMVQTV.

242–249 (GPFGAGKT) is a binding site for ATP.

This sequence belongs to the ATPase alpha/beta chains family.

It carries out the reaction ATP + H2O + 4 H(+)(in) = ADP + phosphate + 5 H(+)(out). In terms of biological role, produces ATP from ADP in the presence of a proton gradient across the membrane. The V-type alpha chain is a catalytic subunit. The chain is V-type ATP synthase alpha chain from Chlamydia trachomatis serovar A (strain ATCC VR-571B / DSM 19440 / HAR-13).